Here is a 200-residue protein sequence, read N- to C-terminus: Large ribosomal subunit protein uL4 (200 aa).

The interval 43–71 is disordered; that stretch reads RAQKTRAEVSGSGKKPWRQKGTGRARSGD.

The protein belongs to the universal ribosomal protein uL4 family. Part of the 50S ribosomal subunit.

One of the primary rRNA binding proteins, this protein initially binds near the 5'-end of the 23S rRNA. It is important during the early stages of 50S assembly. It makes multiple contacts with different domains of the 23S rRNA in the assembled 50S subunit and ribosome. Functionally, forms part of the polypeptide exit tunnel. The protein is Large ribosomal subunit protein uL4 of Mannheimia succiniciproducens (strain KCTC 0769BP / MBEL55E).